The primary structure comprises 290 residues: Protease HtpX homolog (290 aa).

2 helical membrane-spanning segments follow: residues 5-27 (MWLR…GYLF) and 32-51 (VAFI…YWYS). Residue H133 coordinates Zn(2+). E134 is an active-site residue. H137 lines the Zn(2+) pocket. Transmembrane regions (helical) follow at residues 143–163 (ILIG…AYWA) and 182–202 (IIGA…IQAA). E208 provides a ligand contact to Zn(2+).

This sequence belongs to the peptidase M48B family. Zn(2+) is required as a cofactor.

It localises to the cell membrane. This is Protease HtpX homolog from Thermococcus kodakarensis (strain ATCC BAA-918 / JCM 12380 / KOD1) (Pyrococcus kodakaraensis (strain KOD1)).